Consider the following 416-residue polypeptide: Gamma-glutamyl phosphate reductase (416 aa).

Belongs to the gamma-glutamyl phosphate reductase family.

The protein localises to the cytoplasm. The catalysed reaction is L-glutamate 5-semialdehyde + phosphate + NADP(+) = L-glutamyl 5-phosphate + NADPH + H(+). It functions in the pathway amino-acid biosynthesis; L-proline biosynthesis; L-glutamate 5-semialdehyde from L-glutamate: step 2/2. In terms of biological role, catalyzes the NADPH-dependent reduction of L-glutamate 5-phosphate into L-glutamate 5-semialdehyde and phosphate. The product spontaneously undergoes cyclization to form 1-pyrroline-5-carboxylate. In Leptospira interrogans serogroup Icterohaemorrhagiae serovar copenhageni (strain Fiocruz L1-130), this protein is Gamma-glutamyl phosphate reductase.